Consider the following 80-residue polypeptide: Conotoxin SIVB (80 aa).

The N-terminal stretch at 1-21 (MGMRMMFTVFLSVVLATTVVS) is a signal peptide. Residues 22 to 38 (TPSDRASDGRNAAVHER) constitute a propeptide that is removed on maturation. Pyrrolidone carboxylic acid is present on Gln-39. An O-linked (HexNAc...) serine glycan is attached at Ser-45. 4-hydroxyproline is present on residues Pro-55, Pro-60, Pro-61, Pro-69, Pro-72, and Pro-75. Pro-75 carries the post-translational modification Proline amide. Residues 76 to 80 (GRRND) constitute a propeptide that is removed on maturation.

It belongs to the conotoxin A superfamily. Contains 3 disulfide bonds. Post-translationally, O-linked glycan consists of Hex3-HexNAc2 pentasaccharide. In terms of tissue distribution, expressed by the venom duct.

The protein resides in the secreted. Its function is as follows. Neurotoxin with probable activity on sodium channel. Induces intense repetitive firing of the frog neuromuscular junction, leading to a tetanic contracture in muscle fiber (spastic paralysis). In vivo, shows the same effect as the whole venom when injected on fish prey. In Conus striatus (Striated cone), this protein is Conotoxin SIVB.